The chain runs to 164 residues: Endoribonuclease YbeY (164 aa).

H111, H115, and H121 together coordinate Zn(2+). The segment at 142-164 (GYPDPYADDETETSPTVTTKDSE) is disordered. Over residues 154–164 (TSPTVTTKDSE) the composition is skewed to polar residues.

It belongs to the endoribonuclease YbeY family. Zn(2+) serves as cofactor.

It localises to the cytoplasm. Functionally, single strand-specific metallo-endoribonuclease involved in late-stage 70S ribosome quality control and in maturation of the 3' terminus of the 16S rRNA. This is Endoribonuclease YbeY from Pseudomonas fluorescens (strain Pf0-1).